A 121-amino-acid chain; its full sequence is Mediator of RNA polymerase II transcription subunit 22 (121 aa).

The protein belongs to the Mediator complex subunit 22 family. Component of the Mediator complex.

It localises to the nucleus. Functionally, component of the Mediator complex, a coactivator involved in the regulated transcription of nearly all RNA polymerase II-dependent genes. Mediator functions as a bridge to convey information from gene-specific regulatory proteins to the basal RNA polymerase II transcription machinery. Mediator is recruited to promoters by direct interactions with regulatory proteins and serves as a scaffold for the assembly of a functional preinitiation complex with RNA polymerase II and the general transcription factors. In Eremothecium gossypii (strain ATCC 10895 / CBS 109.51 / FGSC 9923 / NRRL Y-1056) (Yeast), this protein is Mediator of RNA polymerase II transcription subunit 22 (SRB6).